The sequence spans 391 residues: Histidinol-phosphate aminotransferase (391 aa).

The residue at position 248 (Lys248) is an N6-(pyridoxal phosphate)lysine.

The protein belongs to the class-II pyridoxal-phosphate-dependent aminotransferase family. Histidinol-phosphate aminotransferase subfamily. Homodimer. Pyridoxal 5'-phosphate serves as cofactor.

It catalyses the reaction L-histidinol phosphate + 2-oxoglutarate = 3-(imidazol-4-yl)-2-oxopropyl phosphate + L-glutamate. The protein operates within amino-acid biosynthesis; L-histidine biosynthesis; L-histidine from 5-phospho-alpha-D-ribose 1-diphosphate: step 7/9. This is Histidinol-phosphate aminotransferase from Shewanella oneidensis (strain ATCC 700550 / JCM 31522 / CIP 106686 / LMG 19005 / NCIMB 14063 / MR-1).